A 335-amino-acid polypeptide reads, in one-letter code: 2-acylglycerol O-acyltransferase 2-B (335 aa).

2 helical membrane passes run 24 to 44 (WAVSFLAMAQCCIALYILLLF) and 104 to 124 (YIMGFHPHGVLVVGAFGNFCT). Asparagine 206 carries N-linked (GlcNAc...) asparagine glycosylation.

This sequence belongs to the diacylglycerol acyltransferase family.

The protein localises to the endoplasmic reticulum membrane. The protein resides in the cytoplasm. It localises to the perinuclear region. The catalysed reaction is a 2-acylglycerol + an acyl-CoA = a 1,2-diacylglycerol + CoA. It carries out the reaction a 2-acylglycerol + an acyl-CoA = a 1,2-diacyl-sn-glycerol + CoA. It catalyses the reaction a 2-acylglycerol + an acyl-CoA = a 2,3-diacyl-sn-glycerol + CoA. The enzyme catalyses a 1-acylglycerol + an acyl-CoA = a 1,2-diacylglycerol + CoA. The catalysed reaction is a 1-acylglycerol + an acyl-CoA = a 1,3-diacylglycerol + CoA. It carries out the reaction 1-O-alkylglycerol + an acyl-CoA = 1-O-alkyl-3-acylglycerol + CoA. It catalyses the reaction an acyl-CoA + a 1,2-diacyl-sn-glycerol = a triacyl-sn-glycerol + CoA. The protein operates within glycerolipid metabolism; triacylglycerol biosynthesis. Catalyzes the formation of diacylglycerol from 2-monoacylglycerol and fatty acyl-CoA. Its function is as follows. Involved in glycerolipid synthesis and lipid metabolism. Catalyzes the formation of diacylglycerol, the precursor of triacylglycerol, by transferring the acyl chain of a fatty acyl-CoA to a monoacylglycerol. Plays a central role in absorption of dietary fat in the small intestine by catalyzing the resynthesis of triacylglycerol in enterocytes. Has a preference toward monoacylglycerols containing unsaturated fatty acids in an order of C18:3 &gt; C18:2 &gt; C18:1 &gt; C18:0 at sn-2. Able to use 1-monoalkylglycerol (1-MAkG, 1-O-alkylglycerol) as an acyl acceptor for the synthesis of monoalkyl-monoacylglycerol (MAMAG, 1-O-alkyl-3-acylglycerol or 1-O-alkyl-2-acylglycerol) and subsequently, with lower efficiency, may add another acyl chain producing monoalkyl-diacylglycerol (MADAG, 1-O-alkyl-2,3-diacylglycerol). Possesses weak but significant activity with diacylglycerol as substrate, producing triacylglycerol (triacyl-sn-glycerol). This Xenopus laevis (African clawed frog) protein is 2-acylglycerol O-acyltransferase 2-B (mogat2-b).